The sequence spans 82 residues: RNA-binding protein Hfq (82 aa).

Residues 10 to 70 (DLFLNTVRKS…ISTIMPSQPV (61 aa)) form the Sm domain.

This sequence belongs to the Hfq family. Homohexamer.

Its function is as follows. RNA chaperone that binds small regulatory RNA (sRNAs) and mRNAs to facilitate mRNA translational regulation in response to envelope stress, environmental stress and changes in metabolite concentrations. Also binds with high specificity to tRNAs. The chain is RNA-binding protein Hfq from Chelativorans sp. (strain BNC1).